A 305-amino-acid chain; its full sequence is Mas-related G-protein coupled receptor member A2B (305 aa).

At M1–K17 the chain is on the extracellular side. The helical transmembrane segment at L18 to L38 threads the bilayer. Topologically, residues G39–N53 are cytoplasmic. Residues L54 to L74 traverse the membrane as a helical segment. Residues K75–Y78 are Extracellular-facing. Residues L79–I99 traverse the membrane as a helical segment. Topologically, residues S100–C132 are cytoplasmic. The helical transmembrane segment at A133–L153 threads the bilayer. Residues H154 to N167 are Extracellular-facing. A helical transmembrane segment spans residues I168–L188. Over L189–T207 the chain is Cytoplasmic. A helical membrane pass occupies residues I208–L228. Over L229–Y244 the chain is Extracellular. The helical transmembrane segment at L245–V265 threads the bilayer. Topologically, residues G266–P305 are cytoplasmic.

Belongs to the G-protein coupled receptor 1 family. Mas subfamily. Expressed in a subset of sensory neurons that includes nociceptors. Expressed in the subclass of non-peptidergic sensory neurons that are IB4(+) and VR1(-).

The protein localises to the cell membrane. Orphan receptor. May be a receptor for RFamide-family neuropeptides such as NPFF and NPAF, which are analgesic in vivo. May regulate nociceptor function and/or development, including the sensation or modulation of pain. In Mus musculus (Mouse), this protein is Mas-related G-protein coupled receptor member A2B.